We begin with the raw amino-acid sequence, 4558 residues long: Multifunctional-autoprocessing repeats-in-toxin (4558 aa).

The first 32 residues, methionine 1–alanine 32, serve as a signal peptide directing secretion. RtxA repeat units follow at residues glycine 114–serine 131, glycine 134–threonine 151, glycine 154–leucine 170, glycine 174–threonine 197, glycine 200–threonine 217, glycine 220–threonine 237, glycine 268–histidine 285, glycine 288–phenylalanine 304, glycine 594–histidine 611, glycine 614–threonine 630, glycine 634–threonine 651, glycine 654–glycine 668, alanine 751–glycine 763, methionine 769–asparagine 781, alanine 792–leucine 808, methionine 811–threonine 826, methionine 830–threonine 845, glycine 851–leucine 865, methionine 868–alanine 885, methionine 887–asparagine 901, methionine 906–aspartate 920, methionine 925–alanine 942, methionine 944–leucine 960, methionine 982–asparagine 994, methionine 1001–serine 1016, glycine 1041–leucine 1053, alanine 1077–aspartate 1089, alanine 1097–valine 1112, glycine 1120–isoleucine 1132, alanine 1135–asparagine 1152, tryptophan 1155–arginine 1169, alanine 1173–valine 1189, glycine 1194–threonine 1209, alanine 1211–valine 1227, alanine 1230–phenylalanine 1246, lysine 1252–threonine 1266, alanine 1268–threonine 1285, alanine 1306–alanine 1323, and methionine 1325–asparagine 1342. Disordered stretches follow at residues histidine 1623–serine 1688, threonine 1752–alanine 1779, and aspartate 1791–glycine 1890. The span at threonine 1625–leucine 1634 shows a compositional bias: polar residues. A compositionally biased stretch (basic and acidic residues) spans serine 1635 to glutamine 1654. The span at glycine 1660–alanine 1679 shows a compositional bias: polar residues. The span at aspartate 1791–histidine 1815 shows a compositional bias: basic and acidic residues. Over residues histidine 1879–alanine 1888 the composition is skewed to polar residues. Residues valine 1988 to alanine 2422 enclose the ACD domain. Serine 1999–glutamate 2003 provides a ligand contact to ATP. Mg(2+) is bound by residues glutamate 2003, glutamate 2065, and glutamine 2149. Arginine 2255 provides a ligand contact to ATP. Glutamate 2326 serves as a coordination point for Mg(2+). Positions glutamate 2574 to leucine 2658 are membrane localization region (MLD). Residues glutamate 2734–leucine 3098 form a rho inactivation domain (RID) region. The segment at valine 3195–alanine 3310 is ABH effector region. The segment at alanine 3404–serine 3426 is disordered. A compositionally biased stretch (polar residues) spans glycine 3414–serine 3426. Residues proline 3462–tryptophan 3646 enclose the Peptidase C80 domain. 1D-myo-inositol hexakisphosphate is bound by residues glutamate 3468–arginine 3470, lysine 3495–histidine 3496, and arginine 3526. Histidine 3532 (for cysteine protease activity) is an active-site residue. Residue serine 3577 participates in 1D-myo-inositol hexakisphosphate binding. Catalysis depends on cysteine 3581, which acts as the Nucleophile; for cysteine protease activity. 1D-myo-inositol hexakisphosphate-binding positions include serine 3610–arginine 3612, arginine 3623–lysine 3624, lysine 3636, and lysine 3641.

Mg(2+) is required as a cofactor.

Its subcellular location is the secreted. It localises to the host cytoplasm. It is found in the host cytosol. The protein resides in the host cell membrane. It catalyses the reaction L-lysyl-/S-(2E,6E,10E)-geranylgeranyl-L-cysteinyl-[protein] + hexadecanoyl-CoA = N(6)-hexadecanoyl-L-lysyl-/S-(2E,6E,10E)-geranylgeranyl-L-cysteinyl-[protein] + CoA + H(+). It carries out the reaction L-lysyl-/S-(2E,6E,10E)-geranylgeranyl-L-cysteinyl-[protein] + dodecanoyl-CoA = N(6)-dodecanoyl-L-lysyl-/S-(2E,6E,10E)-geranylgeranyl-L-cysteinyl-[protein] + CoA + H(+). The catalysed reaction is L-lysyl-/S-(2E,6E,10E)-geranylgeranyl-L-cysteinyl-[protein] + decanoyl-CoA = N(6)-decanoyl-L-lysyl-/S-(2E,6E,10E)-geranylgeranyl-L-cysteinyl-[protein] + CoA + H(+). Its activity is regulated as follows. Protease activity is inhibited by N-ethylmaleimide but not other protease inhibitors. Protease activity is inhibited by aza-leucine epoxide. Protease activity is activated upon binding inositol hexakisphosphate (InsP6) via an allosteric mechanism: the active site is disordered or occluded in the absence of InsP6, protecting the protease active-site sulfhydryl until the toxin enters a eukaryotic cell. Upon processing at the Leu-3441-Ala-3442 site, the peptidase C80 domain is converted to a form with much reduced affinity for InsP6, but is reactivated for high affinity binding of InsP6 by cooperative binding of both a new substrate and InsP6. Reactivation allows cleavage at other sites, specifically at Leu residues between the effector domains. Functionally, precursor of a multifunctional toxin that causes destruction of the actin cytoskeleton by covalent cross-linking of actin and inactivation of Rho GTPases when translocated into the host cytoplasm. Upon translocation into the host cell, undergoes autoprocessing in cis mediated by the peptidase C80 domain (also named CPD domain): the protease activity is activated upon binding inositol hexakisphosphate (InsP6) present at the host cell membrane and delivers the Cysteine protease domain-containing toxin F3 chain to the host cytosol. The Cysteine protease domain-containing toxin F3 chain will then further cleave and release effector toxin chains that cause disassembly of the actin cytoskeleton and enhance V.cholerae colonization of the small intestine, possibly by facilitating evasion of phagocytic cells. Its function is as follows. Following autocatalytic cleavage in cis at the Leu-3441-Ala-3442 site, this chain mediates processing in trans to release other individual toxin chains to the host cytosol. Released effector toxin chains cause disassembly of the actin cytoskeleton and enhance V.cholerae colonization of the small intestine, possibly by facilitating evasion of phagocytic cells. In terms of biological role, actin-directed toxin that catalyzes the covalent cross-linking of host cytoplasmic monomeric actin. Mediates the cross-link between 'Lys-50' of one monomer and 'Glu-270' of another actin monomer, resulting in formation of highly toxic actin oligomers that cause cell rounding. The toxin can be highly efficient at very low concentrations by acting on formin homology family proteins: toxic actin oligomers bind with high affinity to formins and adversely affect both nucleation and elongation abilities of formins, causing their potent inhibition in both profilin-dependent and independent manners. Acts as an acid--amino-acid ligase that transfers the gamma-phosphoryl group of ATP to the 'Glu-270' actin residue, resulting in the formation of an activated acyl phosphate intermediate. This intermediate is further hydrolyzed and the energy of hydrolysis is utilized for the formation of the amide bond between actin subunits. N-epsilon-fatty acyltransferase that mediates lysine-palmitoylation of host Rho GTPase proteins, with a strong preference for host Rac1. After delivery to the host cytosol, localizes to the host cell membrane where it palmitoylates host Rho GTPase proteins, resulting in loss of all active GTP-bound Rho and subsequent actin depolymerization. Prenylation of host Rac1 at the C-terminus is required for lysine-palmitoylation. Functionally, indirectly activates the small GTPase CDC42. The polypeptide is Multifunctional-autoprocessing repeats-in-toxin (Vibrio cholerae serotype O1 (strain ATCC 39315 / El Tor Inaba N16961)).